A 161-amino-acid chain; its full sequence is Regulator of ribonuclease activity A (161 aa).

This sequence belongs to the RraA family. Homotrimer. Binds to both RNA-binding sites in the C-terminal region of Rne and to RhlB.

It localises to the cytoplasm. Functionally, globally modulates RNA abundance by binding to RNase E (Rne) and regulating its endonucleolytic activity. Can modulate Rne action in a substrate-dependent manner by altering the composition of the degradosome. Modulates RNA-binding and helicase activities of the degradosome. The sequence is that of Regulator of ribonuclease activity A from Yersinia pseudotuberculosis serotype O:1b (strain IP 31758).